A 503-amino-acid polypeptide reads, in one-letter code: Probable cytosol aminopeptidase (503 aa).

Positions 270 and 275 each coordinate Mn(2+). Residue lysine 282 is part of the active site. Residues aspartate 293, aspartate 352, and glutamate 354 each coordinate Mn(2+). Arginine 356 is an active-site residue.

It belongs to the peptidase M17 family. It depends on Mn(2+) as a cofactor.

It is found in the cytoplasm. It catalyses the reaction Release of an N-terminal amino acid, Xaa-|-Yaa-, in which Xaa is preferably Leu, but may be other amino acids including Pro although not Arg or Lys, and Yaa may be Pro. Amino acid amides and methyl esters are also readily hydrolyzed, but rates on arylamides are exceedingly low.. The enzyme catalyses Release of an N-terminal amino acid, preferentially leucine, but not glutamic or aspartic acids.. Its function is as follows. Presumably involved in the processing and regular turnover of intracellular proteins. Catalyzes the removal of unsubstituted N-terminal amino acids from various peptides. The sequence is that of Probable cytosol aminopeptidase from Shigella boydii serotype 18 (strain CDC 3083-94 / BS512).